Consider the following 224-residue polypeptide: MSNQKALVIFSGGQDSTTCLIQAIQTYGRENVQAITFRYGQRHAVELERAEWIAQDLGVSQTVLDLSLMRQITHNALMDETAAIETAAIETADNGVPNTFVDGRNALFLLYAAIFAKGQGIRHIIAGVCETDFSGYPDCRGVFVKSMNVTLNLAMDYDFQIHTPLMYLTKAQTWALADEMGVLDYIREQTHTCYKGIVGGCRECPSCILRERGLAECLESKKAV.

An ATP-binding site is contributed by 10-20 (FSGGQDSTTCL). Cysteine 193, cysteine 201, cysteine 204, and cysteine 207 together coordinate Zn(2+).

It belongs to the QueC family. It depends on Zn(2+) as a cofactor.

It catalyses the reaction 7-carboxy-7-deazaguanine + NH4(+) + ATP = 7-cyano-7-deazaguanine + ADP + phosphate + H2O + H(+). It participates in purine metabolism; 7-cyano-7-deazaguanine biosynthesis. In terms of biological role, catalyzes the ATP-dependent conversion of 7-carboxy-7-deazaguanine (CDG) to 7-cyano-7-deazaguanine (preQ(0)). The chain is 7-cyano-7-deazaguanine synthase from Neisseria gonorrhoeae (strain ATCC 700825 / FA 1090).